A 240-amino-acid polypeptide reads, in one-letter code: Homeobox protein DLX-4 (240 aa).

2 disordered regions span residues 44 to 70 and 175 to 194; these read DLSY…DSYL and LKQS…PSLS. Positions 116 to 175 form a DNA-binding region, homeobox; it reads LRKPRTIYSSLQLQHLNQRFQHTQYLALPERAQLAAQLGLTQTQVKIWFQNKRSKYKKLL.

This sequence belongs to the distal-less homeobox family. As to expression, branchial arches, molar and incisor teeth and limbs.

The protein resides in the nucleus. Functionally, may play a role in determining the production of hemoglobin S. May act as a repressor. During embryonic development, plays a role in palatogenesis. The chain is Homeobox protein DLX-4 (Dlx4) from Mus musculus (Mouse).